A 172-amino-acid polypeptide reads, in one-letter code: Dual-action ribosomal maturation protein DarP (172 aa).

This sequence belongs to the DarP family.

It localises to the cytoplasm. In terms of biological role, member of a network of 50S ribosomal subunit biogenesis factors which assembles along the 30S-50S interface, preventing incorrect 23S rRNA structures from forming. Promotes peptidyl transferase center (PTC) maturation. This is Dual-action ribosomal maturation protein DarP from Ectopseudomonas mendocina (strain ymp) (Pseudomonas mendocina).